The chain runs to 307 residues: Lipid droplet-associated hydrolase (307 aa).

Serine 119 functions as the Nucleophile in the catalytic mechanism. The tract at residues glycine 157–isoleucine 200 is potential amphipathic helix required for binding to lipid droplets. The next 2 helical transmembrane spans lie at proline 166–leucine 186 and leucine 188–alanine 208. Active-site charge relay system residues include aspartate 254 and histidine 283.

The protein belongs to the AB hydrolase superfamily. LDAH family. Interacts with the juvenile hormone hydrolase enzymes Jheh1 and Jheh2. Also interacts with Hmu, Cpr, Gp93 and Pvr. In terms of tissue distribution, expressed in accessory glands.

It is found in the lipid droplet. Its subcellular location is the endoplasmic reticulum membrane. It catalyses the reaction a cholesterol ester + H2O = cholesterol + a fatty acid + H(+). Its function is as follows. Probable serine lipid hydrolase associated with lipid droplets. Appears to lack or have very low cholesterol esterase activity. Appears to lack triglyceride lipase activity. Involved in cholesterol and triglyceride homeostasis; stimulates cellular triglyceride accumulation and cellular cholesterol release. Involved in negatively regulating juvenile hormone (JH) and possibly, insulin signaling activities such as triacylglycerols (TAG) storage, and thereby plays a role in the endocrine regulation of organismal growth and survival. Likely functions by enhancing the activity of the JH hydrolase enzymes Jheh1 and Jheh2. Required for lipid droplet positioning and fat storage. In Drosophila melanogaster (Fruit fly), this protein is Lipid droplet-associated hydrolase.